We begin with the raw amino-acid sequence, 155 residues long: Endoribonuclease YbeY (155 aa).

The Zn(2+) site is built by histidine 114, histidine 118, and histidine 124.

This sequence belongs to the endoribonuclease YbeY family. Zn(2+) is required as a cofactor.

Its subcellular location is the cytoplasm. In terms of biological role, single strand-specific metallo-endoribonuclease involved in late-stage 70S ribosome quality control and in maturation of the 3' terminus of the 16S rRNA. The chain is Endoribonuclease YbeY from Proteus mirabilis (strain HI4320).